A 230-amino-acid polypeptide reads, in one-letter code: Sodium channel modifier 1 (230 aa).

S2 is subject to Phosphoserine. Positions 4-20 (KREGDDWSQLNVLKKRR) match the Bipartite nuclear localization signal motif. The Matrin-type zinc finger occupies 42–74 (FACAICPHRPVLDTLAMLTAHRAGKKHLSSLQL). K67 participates in a covalent cross-link: Glycyl lysine isopeptide (Lys-Gly) (interchain with G-Cter in SUMO2). Disordered regions lie at residues 76-106 (YGKK…EAPL) and 129-191 (RRKY…RALD). Basic and acidic residues predominate over residues 89 to 100 (PRQHNELRREET). A compositionally biased stretch (pro residues) spans 142–151 (SRPPLPPPEV). Residues 167-180 (GSQTKESATVSSPA) show a composition bias toward polar residues. Residues S183 and S219 each carry the phosphoserine modification. A required for interaction with LUC7L2 region spans residues 188–230 (RALDHYLTLRSSGWIPDGRGRWIKDENVEFDSDEEEPPDLPLD).

In terms of assembly, component of the minor spliceosome. Within this complex, interacts with RNF113A, as well as with SF3B1/SF3b155, SF3B2/SF3b145, SF3B3/SF3b130 and CDC5L. May interact with LUC7L2 and SNRNP70.

It is found in the nucleus. It localises to the nucleoplasm. The protein resides in the nucleus speckle. As a component of the minor spliceosome, involved in the splicing of U12-type introns in pre-mRNAs. Plays a role in the regulation of primary cilia length and Hedgehog signaling. This chain is Sodium channel modifier 1 (SCNM1), found in Bos taurus (Bovine).